Reading from the N-terminus, the 365-residue chain is MNLAAMDPQTYDAQLEHKRIKLEQAFAQFETPSVEVFASEPANYRMRAEFRMWHDGDDLYYYMFDKVLNEKVRCDQYLPASVLINQMMSALIAELKPNPSLRHKLFQVDFLSTLSGEILVSLLYHRQLDDQWRTNAAALKAKLSSQFNVNIIGRARKQKIDLDKDFVVESLQVNDKTFLYKQIENSFTQPNAKVAVKMLEWAIDVTQDSQGDLLELYCGNGNFSIALAQNFNRVLATELAKPSVEAAQYNIEANGIKNLQIIRMSAEDFSDAMAKKRSFRRLEGIDLDSYVCNTIFVDPPRAGIDPDTLALVQGYERILYISCNPDTLKDNLEQLYKTHRVTQFALFDQFPYTDHMETGVLLERR.

Glutamine 189, tyrosine 217, asparagine 222, glutamate 238, and aspartate 298 together coordinate S-adenosyl-L-methionine. The Nucleophile role is filled by cysteine 323. The Proton acceptor role is filled by glutamate 357.

This sequence belongs to the class I-like SAM-binding methyltransferase superfamily. RNA M5U methyltransferase family. TrmA subfamily.

The catalysed reaction is uridine(54) in tRNA + S-adenosyl-L-methionine = 5-methyluridine(54) in tRNA + S-adenosyl-L-homocysteine + H(+). It carries out the reaction uridine(341) in tmRNA + S-adenosyl-L-methionine = 5-methyluridine(341) in tmRNA + S-adenosyl-L-homocysteine + H(+). Dual-specificity methyltransferase that catalyzes the formation of 5-methyluridine at position 54 (m5U54) in all tRNAs, and that of position 341 (m5U341) in tmRNA (transfer-mRNA). This Shewanella sp. (strain W3-18-1) protein is tRNA/tmRNA (uracil-C(5))-methyltransferase.